The sequence spans 111 residues: Prothymosin alpha (111 aa).

Position 1 is an N-acetylmethionine (Met-1). Positions 1–111 are disordered; it reads MSDAAVDTSS…TKKQKTEEDD (111 aa). Ser-2 bears the N-acetylserine; in Prothymosin alpha, N-terminally processed mark. Ser-2 carries the post-translational modification Phosphoserine. At Thr-8 the chain carries Phosphothreonine. A phosphoserine mark is found at Ser-9 and Ser-10. Residues Thr-13 and Thr-14 each carry the phosphothreonine modification. The span at 13–31 shows a compositional bias: basic and acidic residues; sequence TTKDLKEKKEVVEEAENGR. Residue Lys-15 is modified to N6-acetyllysine; alternate. At Lys-15 the chain carries N6-succinyllysine; alternate. Over residues 43 to 84 the composition is skewed to acidic residues; the sequence is ENGEQEADNEVDEEEEEGGEEEEEEEEGDGEEEDGDEDEEAE. Over residues 101-111 the composition is skewed to basic and acidic residues; the sequence is DTKKQKTEEDD. At Thr-102 the chain carries Phosphothreonine. Lys-103 carries the N6-acetyllysine; alternate modification. Lys-103 is covalently cross-linked (Glycyl lysine isopeptide (Lys-Gly) (interchain with G-Cter in SUMO2); alternate). The residue at position 107 (Thr-107) is a Phosphothreonine.

This sequence belongs to the pro/parathymosin family. As to quaternary structure, interacts with NUPR1; regulates apoptotic process. Post-translationally, covalently linked to a small RNA of about 20 nucleotides.

The protein resides in the nucleus. Prothymosin alpha may mediate immune function by conferring resistance to certain opportunistic infections. The sequence is that of Prothymosin alpha (Ptma) from Mus musculus (Mouse).